The chain runs to 440 residues: Transposon Ty1-DR2 Gag polyprotein (440 aa).

Composition is skewed to polar residues over residues 1 to 31 (MESQ…TTQD) and 137 to 168 (VGTH…TNQH). 3 disordered regions span residues 1–75 (MESQ…PQAA), 137–174 (VGTH…PPPI), and 350–440 (QQES…PGTY). Residues 299 to 401 (NNGIPINNKV…NSQSRTARAH (103 aa)) are RNA-binding. Over residues 363-372 (SPSDEKKDSR) the composition is skewed to basic and acidic residues. The segment covering 373–409 (TYTNTTKPKSITRNSQKPNNSQSRTARAHNVSTSNNF) has biased composition (polar residues). The span at 429–440 (NKHDLHLRPGTY) shows a compositional bias: basic and acidic residues.

In terms of assembly, homotrimer.

The protein localises to the cytoplasm. Functionally, capsid protein (CA) is the structural component of the virus-like particle (VLP), forming the shell that encapsulates the retrotransposons dimeric RNA genome. The particles are assembled from trimer-clustered units and there are holes in the capsid shells that allow for the diffusion of macromolecules. CA also has nucleocapsid-like chaperone activity, promoting primer tRNA(i)-Met annealing to the multipartite primer-binding site (PBS), dimerization of Ty1 RNA and initiation of reverse transcription. The chain is Transposon Ty1-DR2 Gag polyprotein (TY1A-DR2) from Saccharomyces cerevisiae (strain ATCC 204508 / S288c) (Baker's yeast).